Consider the following 152-residue polypeptide: Zinc finger SWIM domain-containing protein 7 (152 aa).

Residues 76-114 form an SWIM-type zinc finger; the sequence is YTCLASCHYCSCPAFSFSVLRKSDSLLCKHLLAIYLSQL.

This sequence belongs to the SWS1 family. As to quaternary structure, interacts with RAD51D and XRCC3; involved in homologous recombination repair. Interacts with SWSAP1; they form a functional complex involved in homologous recombination repair and stabilize each other.

Its subcellular location is the nucleus. In terms of biological role, involved in early stages of the homologous recombination repair (HRR) pathway of double-stranded DNA breaks arising during DNA replication or induced by DNA-damaging agents. Required for meiotic progression, hence for fertility. The protein is Zinc finger SWIM domain-containing protein 7 (Zswim7) of Mus musculus (Mouse).